The following is a 317-amino-acid chain: Putative toluene-4-sulfonate monooxygenase system reductase subunit TsaB2 (317 aa).

The region spanning 4-106 (DVPVTVAAVR…SAPRNLFEMA (103 aa)) is the FAD-binding FR-type domain. 110 to 220 (RRVLLLAGGI…PGSVRMERFK (111 aa)) contributes to the NAD(+) binding site. The region spanning 232-317 (FELVLQRAGL…CGGGRLVLDI (86 aa)) is the 2Fe-2S ferredoxin-type domain. [2Fe-2S] cluster contacts are provided by Cys-266, Cys-271, and Cys-274.

In terms of assembly, monomer. Part of the p-toluenesulfonate methyl-monooxygenase complex TsaBM, comprising the reductase TsaB and the oxygenase TsaM. FMN is required as a cofactor.

Functionally, involved in the toluene-4-sulfonate degradation pathway. This is Putative toluene-4-sulfonate monooxygenase system reductase subunit TsaB2 (tsaB2) from Comamonas testosteroni (Pseudomonas testosteroni).